The primary structure comprises 330 residues: Biotin synthase (330 aa).

Residues Asn-53–Ser-276 enclose the Radical SAM core domain. Cys-68, Cys-72, and Cys-75 together coordinate [4Fe-4S] cluster. [2Fe-2S] cluster contacts are provided by Cys-112, Cys-144, Cys-204, and Arg-274.

Belongs to the radical SAM superfamily. Biotin synthase family. As to quaternary structure, homodimer. The cofactor is [4Fe-4S] cluster. [2Fe-2S] cluster serves as cofactor.

The catalysed reaction is (4R,5S)-dethiobiotin + (sulfur carrier)-SH + 2 reduced [2Fe-2S]-[ferredoxin] + 2 S-adenosyl-L-methionine = (sulfur carrier)-H + biotin + 2 5'-deoxyadenosine + 2 L-methionine + 2 oxidized [2Fe-2S]-[ferredoxin]. The protein operates within cofactor biosynthesis; biotin biosynthesis; biotin from 7,8-diaminononanoate: step 2/2. Its function is as follows. Catalyzes the conversion of dethiobiotin (DTB) to biotin by the insertion of a sulfur atom into dethiobiotin via a radical-based mechanism. This is Biotin synthase from Streptococcus agalactiae serotype III (strain NEM316).